We begin with the raw amino-acid sequence, 194 residues long: Holliday junction branch migration complex subunit RuvA (194 aa).

Residues 1 to 61 (MYDFLTGIIK…DNQISLYGFK (61 aa)) form a domain I region. A domain II region spans residues 62–139 (TVKERNLFQK…GDFSKNIAPM (78 aa)). A flexible linker region spans residues 139-143 (MKNLL). A domain III region spans residues 144-194 (ENSAELDDALAALVALGFSSKEVNKINPKLASLGELTTDAYIQKGLKLLTK).

It belongs to the RuvA family. Homotetramer. Forms an RuvA(8)-RuvB(12)-Holliday junction (HJ) complex. HJ DNA is sandwiched between 2 RuvA tetramers; dsDNA enters through RuvA and exits via RuvB. An RuvB hexamer assembles on each DNA strand where it exits the tetramer. Each RuvB hexamer is contacted by two RuvA subunits (via domain III) on 2 adjacent RuvB subunits; this complex drives branch migration. In the full resolvosome a probable DNA-RuvA(4)-RuvB(12)-RuvC(2) complex forms which resolves the HJ.

The protein resides in the cytoplasm. Functionally, the RuvA-RuvB-RuvC complex processes Holliday junction (HJ) DNA during genetic recombination and DNA repair, while the RuvA-RuvB complex plays an important role in the rescue of blocked DNA replication forks via replication fork reversal (RFR). RuvA specifically binds to HJ cruciform DNA, conferring on it an open structure. The RuvB hexamer acts as an ATP-dependent pump, pulling dsDNA into and through the RuvAB complex. HJ branch migration allows RuvC to scan DNA until it finds its consensus sequence, where it cleaves and resolves the cruciform DNA. The chain is Holliday junction branch migration complex subunit RuvA from Oenococcus oeni (strain ATCC BAA-331 / PSU-1).